The chain runs to 432 residues: Adenylosuccinate synthetase (432 aa).

GTP is bound by residues 11 to 17 (GDEGKGK) and 39 to 41 (GHT). The Proton acceptor role is filled by D12. Residues D12 and G39 each contribute to the Mg(2+) site. Residues 12-15 (DEGK), 37-40 (NAGH), T134, R148, N230, T245, and R309 each bind IMP. Residue H40 is the Proton donor of the active site. Substrate is bound at residue 305-311 (VTTGRKR). GTP contacts are provided by residues R311, 337-339 (KLD), and 419-421 (GTG).

Belongs to the adenylosuccinate synthetase family. As to quaternary structure, homodimer. It depends on Mg(2+) as a cofactor.

It localises to the cytoplasm. It catalyses the reaction IMP + L-aspartate + GTP = N(6)-(1,2-dicarboxyethyl)-AMP + GDP + phosphate + 2 H(+). Its pathway is purine metabolism; AMP biosynthesis via de novo pathway; AMP from IMP: step 1/2. Functionally, plays an important role in the de novo pathway and in the salvage pathway of purine nucleotide biosynthesis. Catalyzes the first committed step in the biosynthesis of AMP from IMP. The polypeptide is Adenylosuccinate synthetase (Candida glabrata (strain ATCC 2001 / BCRC 20586 / JCM 3761 / NBRC 0622 / NRRL Y-65 / CBS 138) (Yeast)).